The chain runs to 246 residues: Alpha-tubulin N-acetyltransferase (246 aa).

The N-acetyltransferase domain maps to 21 to 202 (LTLVPDGVSR…NNFVVFHSFF (182 aa)). Acetyl-CoA contacts are provided by residues 135 to 148 (FYVD…GYGK) and 172 to 181 (SNKLLGFLRK).

Belongs to the acetyltransferase ATAT1 family.

It catalyses the reaction L-lysyl-[alpha-tubulin] + acetyl-CoA = N(6)-acetyl-L-lysyl-[alpha-tubulin] + CoA + H(+). Functionally, specifically acetylates 'Lys-40' in alpha-tubulin on the lumenal side of microtubules. Promotes microtubule destabilization and accelerates microtubule dynamics; this activity may be independent of acetylation activity. Acetylates alpha-tubulin with a slow enzymatic rate, due to a catalytic site that is not optimized for acetyl transfer. Enters the microtubule through each end and diffuses quickly throughout the lumen of microtubules. Acetylates only long/old microtubules because of its slow acetylation rate since it does not have time to act on dynamically unstable microtubules before the enzyme is released. The sequence is that of Alpha-tubulin N-acetyltransferase from Leishmania infantum.